The sequence spans 422 residues: Probable biofilm formation methyltransferase WspC (422 aa).

The CheR-type methyltransferase domain maps to 1–264 (MNDRFERLLK…LSFVFRRTSE (264 aa)). Residues Thr-67, Arg-71, Glu-108, Asp-132, 186 to 187 (NL), and 205 to 206 (RN) each bind S-adenosyl-L-methionine. Residues 289 to 316 (ASIRPSPPPPAKPRQRLSSLVPPASGQP) are disordered. One copy of the TPR repeat lies at 354–387 (ATVFYWLGLLSDVAGQEQEAQDFYRKALYLEPQH).

In terms of assembly, monomer.

In terms of biological role, involved in biofilm formation. The protein is Probable biofilm formation methyltransferase WspC (wspC) of Pseudomonas aeruginosa (strain ATCC 15692 / DSM 22644 / CIP 104116 / JCM 14847 / LMG 12228 / 1C / PRS 101 / PAO1).